The sequence spans 209 residues: Large ribosomal subunit protein uL3 (209 aa).

Positions 130 to 162 (RGPMTHGSKFKRAPGSMGASSDPSRTFKNKRMP) are disordered.

Belongs to the universal ribosomal protein uL3 family. Part of the 50S ribosomal subunit. Forms a cluster with proteins L14 and L19.

In terms of biological role, one of the primary rRNA binding proteins, it binds directly near the 3'-end of the 23S rRNA, where it nucleates assembly of the 50S subunit. This chain is Large ribosomal subunit protein uL3, found in Clostridium botulinum (strain Alaska E43 / Type E3).